The sequence spans 289 residues: Serine/threonine-protein phosphatase Pgam5, mitochondrial (289 aa).

A helical transmembrane segment spans residues 7–23; the sequence is FACGTGAGLAAYYLQRL.

The protein belongs to the phosphoglycerate mutase family. BPG-dependent PGAM subfamily. Interacts with Pk92B/ASK1.

Its subcellular location is the mitochondrion outer membrane. It carries out the reaction O-phospho-L-seryl-[protein] + H2O = L-seryl-[protein] + phosphate. It catalyses the reaction O-phospho-L-threonyl-[protein] + H2O = L-threonyl-[protein] + phosphate. Its function is as follows. Displays phosphatase activity for serine/threonine residues, and dephosphorylates and activates Pk92B kinase. Has apparently no phosphoglycerate mutase activity. This chain is Serine/threonine-protein phosphatase Pgam5, mitochondrial, found in Drosophila simulans (Fruit fly).